A 123-amino-acid polypeptide reads, in one-letter code: MALSKDDVLNAIAEMSVMDIVELISAMEEKFGVTAAVAAAPAAAGPAAAAAEEKDEFDVVLASFGEKKVGVIKAVREATGLGLKEAKDLVESAPASIKEGVNKAEAEELKKKLEEAGATVELK.

Belongs to the bacterial ribosomal protein bL12 family. In terms of assembly, homodimer. Part of the ribosomal stalk of the 50S ribosomal subunit. Forms a multimeric L10(L12)X complex, where L10 forms an elongated spine to which 2 to 4 L12 dimers bind in a sequential fashion. Binds GTP-bound translation factors.

Forms part of the ribosomal stalk which helps the ribosome interact with GTP-bound translation factors. Is thus essential for accurate translation. This is Large ribosomal subunit protein bL12 from Psychrobacter arcticus (strain DSM 17307 / VKM B-2377 / 273-4).